The sequence spans 334 residues: Type IV inositol polyphosphate 5-phosphatase 11 (334 aa).

Catalytic regions lie at residues 206 to 222 and 282 to 297; these read DLTVWLGDLNYRIQDVS and KIRVPAWTDRILFKIQ.

It belongs to the inositol polyphosphate 5-phosphatase family. In terms of tissue distribution, expressed ubiquitously.

Its subcellular location is the cell membrane. The enzyme catalyses a 1,2-diacyl-sn-glycero-3-phospho-(1D-myo-inositol-4,5-bisphosphate) + H2O = a 1,2-diacyl-sn-glycero-3-phospho-(1D-myo-inositol 4-phosphate) + phosphate. It catalyses the reaction a 1,2-diacyl-sn-glycero-3-phospho-(1D-myo-inositol-3,4,5-trisphosphate) + H2O = a 1,2-diacyl-sn-glycero-3-phospho-(1D-myo-inositol-3,4-bisphosphate) + phosphate. Its function is as follows. Has phosphatase activity toward PtdIns(4,5)P2, and in vitro toward PtdIns(3,5)P2 and PtdIns(3,4,5)P3. Cannot dephosphorylate PtdIns(5)P, Ins(1,4,5)P3 and Ins(1,3,4,5)P4. The chain is Type IV inositol polyphosphate 5-phosphatase 11 from Arabidopsis thaliana (Mouse-ear cress).